The following is a 385-amino-acid chain: 3-hydroxyisobutyryl-CoA hydrolase, mitochondrial (385 aa).

Substrate contacts are provided by E120, G145, E168, and D176.

This sequence belongs to the enoyl-CoA hydratase/isomerase family.

The protein localises to the mitochondrion. It carries out the reaction 3-hydroxy-2-methylpropanoyl-CoA + H2O = 3-hydroxy-2-methylpropanoate + CoA + H(+). It functions in the pathway amino-acid degradation; L-valine degradation. In terms of biological role, hydrolyzes 3-hydroxyisobutyryl-CoA (HIBYL-CoA), a saline catabolite. Has high activity toward isobutyryl-CoA. Could be an isobutyryl-CoA dehydrogenase that functions in valine catabolism. Also hydrolyzes 3-hydroxypropanoyl-CoA. In Gallus gallus (Chicken), this protein is 3-hydroxyisobutyryl-CoA hydrolase, mitochondrial (HIBCH).